A 341-amino-acid polypeptide reads, in one-letter code: Anthranilate phosphoribosyltransferase (341 aa).

5-phospho-alpha-D-ribose 1-diphosphate contacts are provided by residues Gly79, 82 to 83, Thr87, 89 to 92, 107 to 115, and Ser119; these read GD, NIST, and KHGNRAVSS. Gly79 contacts anthranilate. Ser91 serves as a coordination point for Mg(2+). An anthranilate-binding site is contributed by Asn110. Arg165 contributes to the anthranilate binding site. Residues Asp224 and Glu225 each coordinate Mg(2+).

The protein belongs to the anthranilate phosphoribosyltransferase family. As to quaternary structure, homodimer. Requires Mg(2+) as cofactor.

It carries out the reaction N-(5-phospho-beta-D-ribosyl)anthranilate + diphosphate = 5-phospho-alpha-D-ribose 1-diphosphate + anthranilate. Its pathway is amino-acid biosynthesis; L-tryptophan biosynthesis; L-tryptophan from chorismate: step 2/5. In terms of biological role, catalyzes the transfer of the phosphoribosyl group of 5-phosphorylribose-1-pyrophosphate (PRPP) to anthranilate to yield N-(5'-phosphoribosyl)-anthranilate (PRA). The sequence is that of Anthranilate phosphoribosyltransferase from Bacillus cereus (strain AH820).